The chain runs to 447 residues: UPF0210 protein lp_2507 (447 aa).

This sequence belongs to the UPF0210 family. As to quaternary structure, homodimer.

This chain is UPF0210 protein lp_2507, found in Lactiplantibacillus plantarum (strain ATCC BAA-793 / NCIMB 8826 / WCFS1) (Lactobacillus plantarum).